The primary structure comprises 264 residues: Protein FAM228B (264 aa).

It belongs to the FAM228 family.

The sequence is that of Protein FAM228B (FAM228B) from Bos taurus (Bovine).